Here is a 289-residue protein sequence, read N- to C-terminus: Early E4 34 kDa protein (289 aa).

This sequence belongs to the adenoviridae E4 30 to 34 kDa protein family. As to quaternary structure, interacts with E1B-55k.

It localises to the host nucleus. It is found in the host cytoplasm. Plays a major role to prevent cellular inhibition of viral genome replication by nuclear bodies. Assembles an SCF-like E3 ubiquitin ligase complex based on the cellular proteins ELOB, ELOC, CUL5 and RBX1, in cooperation with viral E1B-55K. This viral RING-type ligase ubiquitinates cellular substrates prior to proteasomal degradation: p53/TP53, LIG4, MRE11-RAD50-NBS1 (MRN) complex, ITGA3, DAXX and BLM. In Human adenovirus F serotype 40 (HAdV-40), this protein is Early E4 34 kDa protein.